We begin with the raw amino-acid sequence, 930 residues long: Bifunctional uridylyltransferase/uridylyl-removing enzyme (930 aa).

A uridylyltransferase region spans residues 1 to 387 (MAPASEAGPA…IMGLFRRKKR (387 aa)). The uridylyl-removing stretch occupies residues 388–741 (LKPEYSLVNG…LDPDPDRDAT (354 aa)). The HD domain maps to 504–626 (VDEHTIQCIS…VRSKKRLDLL (123 aa)). ACT domains follow at residues 742-818 (RACF…VVAR) and 852-927 (IIEV…GAER).

This sequence belongs to the GlnD family. Mg(2+) serves as cofactor.

The catalysed reaction is [protein-PII]-L-tyrosine + UTP = [protein-PII]-uridylyl-L-tyrosine + diphosphate. It carries out the reaction [protein-PII]-uridylyl-L-tyrosine + H2O = [protein-PII]-L-tyrosine + UMP + H(+). With respect to regulation, uridylyltransferase (UTase) activity is inhibited by glutamine, while glutamine activates uridylyl-removing (UR) activity. Modifies, by uridylylation and deuridylylation, the PII regulatory proteins (GlnB and homologs), in response to the nitrogen status of the cell that GlnD senses through the glutamine level. Under low glutamine levels, catalyzes the conversion of the PII proteins and UTP to PII-UMP and PPi, while under higher glutamine levels, GlnD hydrolyzes PII-UMP to PII and UMP (deuridylylation). Thus, controls uridylylation state and activity of the PII proteins, and plays an important role in the regulation of nitrogen fixation and metabolism. The chain is Bifunctional uridylyltransferase/uridylyl-removing enzyme from Cereibacter sphaeroides (strain ATCC 17023 / DSM 158 / JCM 6121 / CCUG 31486 / LMG 2827 / NBRC 12203 / NCIMB 8253 / ATH 2.4.1.) (Rhodobacter sphaeroides).